A 299-amino-acid polypeptide reads, in one-letter code: Zinc-alpha-2-glycoprotein (299 aa).

An N-terminal signal peptide occupies residues 1–17 (MVPVLLALLLLLGPAVS). Residues N24, N125, and N256 are each glycosylated (N-linked (GlcNAc...) asparagine). Disulfide bonds link C120–C183 and C222–C277. Positions 204 to 289 (PSVSVTGHAA…EHRSLTRPLT (86 aa)) constitute an Ig-like C1-type domain.

This sequence belongs to the MHC class I family. In terms of assembly, interacts with PIP.

It is found in the secreted. Stimulates lipid degradation in adipocytes and causes the extensive fat losses associated with some advanced cancers. This chain is Zinc-alpha-2-glycoprotein (AZGP1), found in Bos taurus (Bovine).